The chain runs to 1722 residues: Lymphocyte antigen 75 (1722 aa).

Residues 1–27 form the signal peptide; the sequence is MRTGWATPRRPAGLLMLLFWFFDLAEP. Over 28–1666 the chain is Extracellular; the sequence is SGRAANDPFT…VVCKVPLGPD (1639 aa). In terms of domain architecture, Ricin B-type lectin spans 33–156; that stretch reads NDPFTIVHGN…ESLCDQPYHE (124 aa). A glycan (N-linked (GlcNAc...) asparagine) is linked at N135. The Fibronectin type-II domain occupies 164–211; that stretch reads SYGRPCEFPFLIDGTWHHDCILDEDHSGPWCATTLNYEYDRKWGICLK. 4 disulfide bridges follow: C169–C194, C183–C209, C247–C340, and C317–C332. Positions 225-341 constitute a C-type lectin 1 domain; sequence QFGSCYQFNT…CEAQLPYVCR (117 aa). N345 and N377 each carry an N-linked (GlcNAc...) asparagine glycan. 4 C-type lectin domains span residues 368 to 486, 493 to 625, 652 to 778, and 818 to 931; these read NNGF…YVCK, NDAS…ICKK, ASLS…IYLR, and IEGS…FICE. Cystine bridges form between C389-C485 and C462-C477. N-linked (GlcNAc...) asparagine glycosylation is present at N529. Residues C597 and C614 are joined by a disulfide bond. 2 disulfide bridges follow: C840–C930 and C904–C922. 2 N-linked (GlcNAc...) asparagine glycosylation sites follow: N843 and N865. Y933 carries the post-translational modification Phosphotyrosine. 3 N-linked (GlcNAc...) asparagine glycosylation sites follow: N934, N1076, and N1103. A C-type lectin 6 domain is found at 958–1091; it reads FQNKCFLKIK…ERHFVSLCQK (134 aa). The cysteines at positions 1060 and 1080 are disulfide-linked. Residues 1110–1222 form the C-type lectin 7 domain; it reads YLNNLYKIIP…DNQPGAICYY (113 aa). A disulfide bond links C1197 and C1211. N-linked (GlcNAc...) asparagine glycans are attached at residues N1225, N1320, and N1392. A C-type lectin 8 domain is found at 1251–1374; that stretch reads FQNCCYNFII…VIEEAVYFHQ (124 aa). C-type lectin domains lie at 1401–1513 and 1542–1661; these read YEDG…ICYK and YKGH…VCKV. Cysteines 1488 and 1502 form a disulfide. N-linked (GlcNAc...) asparagine glycosylation is found at N1593 and N1626. A disulfide bridge links C1635 with C1650. Residues 1667-1691 form a helical membrane-spanning segment; it reads YTAIAIIVATLSILVLMGGLIWFLF. Topologically, residues 1692–1722 are cytoplasmic; the sequence is QRHRLHLAGFSSVRYAQGVNEDEIMLPSFHD. Phosphoserine is present on residues S1703 and S1719.

N-glycosylated. As to expression, expressed in spleen, thymus, colon and peripheral blood lymphocytes. Detected in myeloid and B-lymphoid cell lines. Isoform 2 and isoform 3 are expressed in malignant Hodgkin lymphoma cells called Hodgkin and Reed-Sternberg (HRS) cells.

It is found in the membrane. Acts as an endocytic receptor to direct captured antigens from the extracellular space to a specialized antigen-processing compartment. Causes reduced proliferation of B-lymphocytes. The protein is Lymphocyte antigen 75 (LY75) of Homo sapiens (Human).